A 741-amino-acid chain; its full sequence is Phosphoribosylformylglycinamidine synthase subunit PurL (741 aa).

Histidine 54 is a catalytic residue. ATP is bound by residues tyrosine 57 and lysine 98. Glutamate 100 lines the Mg(2+) pocket. Substrate-binding positions include 101–104 (SHNH) and arginine 123. Histidine 102 (proton acceptor) is an active-site residue. Position 124 (aspartate 124) interacts with Mg(2+). Glutamine 251 contributes to the substrate binding site. Aspartate 279 is a binding site for Mg(2+). 323 to 325 (ESQ) contacts substrate. ATP is bound by residues aspartate 510 and glycine 547. Asparagine 548 contributes to the Mg(2+) binding site. Serine 550 serves as a coordination point for substrate.

Belongs to the FGAMS family. Monomer. Part of the FGAM synthase complex composed of 1 PurL, 1 PurQ and 2 PurS subunits.

It is found in the cytoplasm. The enzyme catalyses N(2)-formyl-N(1)-(5-phospho-beta-D-ribosyl)glycinamide + L-glutamine + ATP + H2O = 2-formamido-N(1)-(5-O-phospho-beta-D-ribosyl)acetamidine + L-glutamate + ADP + phosphate + H(+). The protein operates within purine metabolism; IMP biosynthesis via de novo pathway; 5-amino-1-(5-phospho-D-ribosyl)imidazole from N(2)-formyl-N(1)-(5-phospho-D-ribosyl)glycinamide: step 1/2. Functionally, part of the phosphoribosylformylglycinamidine synthase complex involved in the purines biosynthetic pathway. Catalyzes the ATP-dependent conversion of formylglycinamide ribonucleotide (FGAR) and glutamine to yield formylglycinamidine ribonucleotide (FGAM) and glutamate. The FGAM synthase complex is composed of three subunits. PurQ produces an ammonia molecule by converting glutamine to glutamate. PurL transfers the ammonia molecule to FGAR to form FGAM in an ATP-dependent manner. PurS interacts with PurQ and PurL and is thought to assist in the transfer of the ammonia molecule from PurQ to PurL. The protein is Phosphoribosylformylglycinamidine synthase subunit PurL of Picrophilus torridus (strain ATCC 700027 / DSM 9790 / JCM 10055 / NBRC 100828 / KAW 2/3).